Reading from the N-terminus, the 1676-residue chain is Protein TIC 214 (1676 aa).

The next 6 membrane-spanning stretches (helical) occupy residues 24–44 (KIIN…ALAL), 70–90 (LILG…YIAF), 93–113 (PYTL…GNNL), 130–150 (LEIL…TCIF), 170–190 (MVFL…VLMC), and 218–238 (FFLV…IQSL). Basic and acidic residues-rich tracts occupy residues 264 to 276 (LKKS…GKST) and 283 to 298 (SHEK…SKLE). Disordered regions lie at residues 264 to 302 (LKKS…NEDE), 546 to 610 (LVVF…SYSI), 1123 to 1151 (NKQS…NLIL), and 1372 to 1436 (QQQN…SEDD). Over residues 562–586 (DSGNIQNKSSDKTINPQNNLTNSKT) the composition is skewed to polar residues. A compositionally biased stretch (basic and acidic residues) spans 597–610 (TTEKEPKDDKSYSI). A compositionally biased stretch (polar residues) spans 1123–1138 (NKQSLQKGNSKGNSNL). The segment covering 1372–1390 (QQQNQTTTKINTETKNQQK) has biased composition (low complexity). A coiled-coil region spans residues 1384-1436 (ETKNQQKNRVENEENKETENQQNAETKNKQKSKTENEENKETENQQNDESEDD). Basic and acidic residues-rich tracts occupy residues 1391 to 1402 (NRVENEENKETE) and 1409 to 1426 (TKNK…KETE).

Belongs to the TIC214 family. Part of the Tic complex.

Its subcellular location is the plastid. The protein resides in the chloroplast inner membrane. Involved in protein precursor import into chloroplasts. May be part of an intermediate translocation complex acting as a protein-conducting channel at the inner envelope. The protein is Protein TIC 214 of Cuscuta obtusiflora (Peruvian dodder).